A 96-amino-acid chain; its full sequence is Protein RnfH (96 aa).

It belongs to the UPF0125 (RnfH) family.

The protein is Protein RnfH of Shigella flexneri.